The sequence spans 142 residues: Cystatin-8 (142 aa).

Positions 1–19 (MAKPLWLSLILFIIPVALA) are cleaved as a signal peptide. N-linked (GlcNAc...) asparagine glycosylation occurs at Asn-39. Residues 77 to 81 (QITDR) carry the Secondary area of contact motif. 2 disulfide bridges follow: Cys-95–Cys-105 and Cys-119–Cys-139. A glycan (N-linked (GlcNAc...) asparagine) is linked at Asn-100.

This sequence belongs to the cystatin family. As to expression, proximal caput region of the epididymis. Lower expression in the testis. Within the testis it is localized to the elongating spermatids, whereas within the epididymis it is exclusively synthesized by the proximal caput epithelium.

Its subcellular location is the secreted. Performs a specialized role during sperm development and maturation. This chain is Cystatin-8 (Cst8), found in Mus musculus (Mouse).